Consider the following 219-residue polypeptide: Protein Ac132 (219 aa).

Residues 1–34 (MSDKTPTKKGGSHAMTLRERGVTKPPKKSEKLQQ) form a disordered region. Positions 16–33 (TLRERGVTKPPKKSEKLQ) are enriched in basic and acidic residues. Residues 103-134 (YPMAYFVNTDYKLKLECARIRSDLLYKNKNEV) are NEBU-like domain.

Interacts with viral envelope protein E18 and the DNA-binding protein p6.9.

It localises to the host cytoplasm. Its subcellular location is the host nucleus. It is found in the virion. Functionally, plays an essential role in nucleocapsid entry in host nucleus. May act by binding and stabilizing F-actin in the infected cell, which might attach to nucleocapsids and then push the nucleocapsids into the nucleus. The chain is Protein Ac132 (Ac132) from Autographa californica nuclear polyhedrosis virus (AcMNPV).